Consider the following 411-residue polypeptide: uncharacterized protein (411 aa).

The segment at 32 to 108 is disordered; it reads LGGDPAPKPT…PEHPRRIPIP (77 aa).

This is an uncharacterized protein from Ictalurid herpesvirus 1 (strain Auburn) (IcHV-1).